The primary structure comprises 90 residues: UPF0329 protein ECU04_1650 (90 aa).

Belongs to the UPF0329 family.

This is UPF0329 protein ECU04_1650 from Encephalitozoon cuniculi (strain GB-M1) (Microsporidian parasite).